The primary structure comprises 63 residues: Keratin-associated protein 8-1 (63 aa).

Residues 12–54 (PGCYWGSYGYPLGYSVGCGYGSTYSPVGYGFGYGYNGCGAFGY) are 12 X 2 AA repeats of G-[YCGS].

It belongs to the KRTAP type 8 family. Interacts with hair keratins. Is essentially restricted to only one vertical half of the hair forming compartment and in beard hairs is absent from the central medulla.

In the hair cortex, hair keratin intermediate filaments are embedded in an interfilamentous matrix, consisting of hair keratin-associated proteins (KRTAP), which are essential for the formation of a rigid and resistant hair shaft through their extensive disulfide bond cross-linking with abundant cysteine residues of hair keratins. The matrix proteins include the high-sulfur and high-glycine-tyrosine keratins. This chain is Keratin-associated protein 8-1 (KRTAP8-1), found in Homo sapiens (Human).